The following is a 121-amino-acid chain: Small ribosomal subunit protein uS12c (121 aa).

It belongs to the universal ribosomal protein uS12 family. As to quaternary structure, part of the 30S ribosomal subunit.

Its subcellular location is the plastid. The protein resides in the apicoplast. Functionally, with S4 and S5 plays an important role in translational accuracy. Located at the interface of the 30S and 50S subunits. This chain is Small ribosomal subunit protein uS12c (rps12), found in Toxoplasma gondii.